The sequence spans 136 residues: Large ribosomal subunit protein bL17 (136 aa).

It belongs to the bacterial ribosomal protein bL17 family. As to quaternary structure, part of the 50S ribosomal subunit. Contacts protein L32.

This Rhodopseudomonas palustris (strain BisA53) protein is Large ribosomal subunit protein bL17.